Here is a 143-residue protein sequence, read N- to C-terminus: Competence protein ComGD (143 aa).

The propeptide occupies 1–10 (MNIKLNEEKG). Phenylalanine 11 bears the N-methylphenylalanine mark. Residues 11 to 31 (FTLLESLLVLSLASILLVAVF) traverse the membrane as a helical segment.

In terms of assembly, the transformation pili are flexible filaments, consisting mainly of the major pilin ComGC and smaller amounts of the minor pilins, including at least ComGD, ComGF and ComGG. Interacts with ComGF. Interacts with ComGG. Processing of ComGD in competent cells requires ComC.

It is found in the cell membrane. The protein resides in the cell surface. Required for formation of the type IV-like pilus (T4P) that plays a role in transformation. Transformation pili are dynamically extended and retracted, perhaps thereby promoting DNA uptake and transformation. Required for transformation and DNA binding. The sequence is that of Competence protein ComGD (comGD) from Bacillus subtilis (strain 168).